Reading from the N-terminus, the 429-residue chain is Histidine--tRNA ligase (429 aa).

This sequence belongs to the class-II aminoacyl-tRNA synthetase family. Homodimer.

The protein resides in the cytoplasm. It carries out the reaction tRNA(His) + L-histidine + ATP = L-histidyl-tRNA(His) + AMP + diphosphate + H(+). The protein is Histidine--tRNA ligase of Oceanobacillus iheyensis (strain DSM 14371 / CIP 107618 / JCM 11309 / KCTC 3954 / HTE831).